Reading from the N-terminus, the 311-residue chain is Solute carrier family 25 member 48 (311 aa).

Solcar repeat units follow at residues 3–86, 100–205, and 214–301; these read NFQL…TQRF, PHVL…LSDW, and PSPC…SLQA. Transmembrane regions (helical) follow at residues 9 to 29, 61 to 81, 107 to 127, 193 to 213, 217 to 237, and 277 to 295; these read FVAG…LDTV, GMSF…GVFS, LLAS…VDLI, CLYF…ACAG, CAVW…ATPM, and ITVN…FLGY.

Belongs to the mitochondrial carrier (TC 2.A.29) family.

The protein resides in the mitochondrion inner membrane. The protein is Solute carrier family 25 member 48 (SLC25A48) of Bos taurus (Bovine).